The primary structure comprises 500 residues: Histidine--tRNA ligase (500 aa).

Belongs to the class-II aminoacyl-tRNA synthetase family. As to quaternary structure, homodimer.

It is found in the cytoplasm. The catalysed reaction is tRNA(His) + L-histidine + ATP = L-histidyl-tRNA(His) + AMP + diphosphate + H(+). The protein is Histidine--tRNA ligase (hisS) of Mesorhizobium japonicum (strain LMG 29417 / CECT 9101 / MAFF 303099) (Mesorhizobium loti (strain MAFF 303099)).